The following is a 163-amino-acid chain: Putative 4-hydroxy-4-methyl-2-oxoglutarate aldolase (163 aa).

Substrate is bound by residues 76–79 and arginine 98; that span reads GDML. Aspartate 99 contacts a divalent metal cation.

Belongs to the class II aldolase/RraA-like family. Homotrimer. A divalent metal cation is required as a cofactor.

It carries out the reaction 4-hydroxy-4-methyl-2-oxoglutarate = 2 pyruvate. The enzyme catalyses oxaloacetate + H(+) = pyruvate + CO2. Its function is as follows. Catalyzes the aldol cleavage of 4-hydroxy-4-methyl-2-oxoglutarate (HMG) into 2 molecules of pyruvate. Also contains a secondary oxaloacetate (OAA) decarboxylase activity due to the common pyruvate enolate transition state formed following C-C bond cleavage in the retro-aldol and decarboxylation reactions. This chain is Putative 4-hydroxy-4-methyl-2-oxoglutarate aldolase, found in Pseudomonas entomophila (strain L48).